Reading from the N-terminus, the 230-residue chain is Orotidine 5'-phosphate decarboxylase (230 aa).

Substrate is bound by residues Asp10, Lys31, 58 to 67 (DLKLHDIPNT), Thr117, Arg179, Gln188, Gly208, and Arg209. Catalysis depends on Lys60, which acts as the Proton donor.

Belongs to the OMP decarboxylase family. Type 1 subfamily. As to quaternary structure, homodimer.

The catalysed reaction is orotidine 5'-phosphate + H(+) = UMP + CO2. It participates in pyrimidine metabolism; UMP biosynthesis via de novo pathway; UMP from orotate: step 2/2. In terms of biological role, catalyzes the decarboxylation of orotidine 5'-monophosphate (OMP) to uridine 5'-monophosphate (UMP). The polypeptide is Orotidine 5'-phosphate decarboxylase (Staphylococcus aureus (strain USA300)).